Here is a 275-residue protein sequence, read N- to C-terminus: uncharacterized protein (275 aa).

Residues 20–22 (RAQ), 41–42 (DI), 80–81 (DI), and asparagine 107 contribute to the NAD(+) site. Serine 160 serves as a coordination point for substrate. The Proton acceptor role is filled by tyrosine 173. Residues lysine 177 and 206–208 (VDT) contribute to the NAD(+) site.

The protein belongs to the short-chain dehydrogenases/reductases (SDR) family.

This is an uncharacterized protein from Mycobacterium tuberculosis (strain CDC 1551 / Oshkosh).